Consider the following 140-residue polypeptide: Large ribosomal subunit protein bL17 (140 aa).

The protein belongs to the bacterial ribosomal protein bL17 family. As to quaternary structure, part of the 50S ribosomal subunit. Contacts protein L32.

This Beijerinckia indica subsp. indica (strain ATCC 9039 / DSM 1715 / NCIMB 8712) protein is Large ribosomal subunit protein bL17.